The following is a 244-amino-acid chain: 7-cyano-7-deazaguanine synthase (244 aa).

14–24 (FSGGQDSATCL) serves as a coordination point for ATP. Zn(2+) is bound by residues cysteine 202, cysteine 217, cysteine 220, and cysteine 223.

Belongs to the QueC family. The cofactor is Zn(2+).

It carries out the reaction 7-carboxy-7-deazaguanine + NH4(+) + ATP = 7-cyano-7-deazaguanine + ADP + phosphate + H2O + H(+). The protein operates within purine metabolism; 7-cyano-7-deazaguanine biosynthesis. Functionally, catalyzes the ATP-dependent conversion of 7-carboxy-7-deazaguanine (CDG) to 7-cyano-7-deazaguanine (preQ(0)). This chain is 7-cyano-7-deazaguanine synthase, found in Paraburkholderia phytofirmans (strain DSM 17436 / LMG 22146 / PsJN) (Burkholderia phytofirmans).